A 545-amino-acid polypeptide reads, in one-letter code: Serine/threonine-protein kinase PAK 1 (545 aa).

The tract at residues 1 to 77 (MSNNGLDIQD…KEKERPEISL (77 aa)) is disordered. An N-acetylserine modification is found at S2. S21 is modified (phosphoserine; by PKB and autocatalysis). Phosphoserine; by autocatalysis is present on S57. Basic and acidic residues predominate over residues 68-77 (KEKERPEISL). The interval 70 to 140 (KERPEISLPS…YNSKKTSNSQ (71 aa)) is autoregulatory region. The CRIB domain occupies 75–88 (ISLPSDFEHTIHVG). Positions 75–105 (ISLPSDFEHTIHVGFDAVTGEFTGMPEQWAR) are GTPase-binding. T84 carries the post-translational modification Phosphothreonine; by OXSR1. S115 carries the post-translational modification Phosphoserine. Phosphotyrosine is present on residues Y131 and Y142. At S144 the chain carries Phosphoserine; by autocatalysis. Position 149 is a phosphoserine (S149). Y153 is modified (phosphotyrosine; by JAK2). Positions 159–198 (LNVKAVSETPAVPPVSEDEDDDDDDATPPPVIAPRPEHTK) are disordered. Position 174 is a phosphoserine (S174). Positions 174 to 184 (SEDEDDDDDDA) are enriched in acidic residues. A Phosphothreonine modification is found at T185. S199 bears the Phosphoserine; by autocatalysis mark. Phosphotyrosine; by JAK2 is present on Y201. S204 is modified (phosphoserine). Residues 211 to 251 (VTPTRDVATSPISPTENNTTPPDALTRNTEKQKKKPKMSDE) are disordered. Phosphothreonine occurs at positions 212 and 219. Phosphoserine occurs at positions 220 and 223. Residues 220-231 (SPISPTENNTTP) show a composition bias toward polar residues. Residues T225, T229, and T230 each carry the phosphothreonine modification. The Protein kinase domain occupies 270 to 521 (YTRFEKIGQG…AKELLQHQFL (252 aa)). 276-284 (IGQGASGTV) is a binding site for ATP. Y285 is modified (phosphotyrosine; by JAK2). ATP is bound by residues K299 and 345–347 (EYL). D389 functions as the Proton acceptor in the catalytic mechanism. Phosphothreonine; by autocatalysis, BRSK2 and PDPK1 is present on T423.

It belongs to the protein kinase superfamily. STE Ser/Thr protein kinase family. STE20 subfamily. In terms of assembly, homodimer; homodimerization results in autoinhibition. Active as monomer. Interacts with GIT1. Component of cytoplasmic complexes, which also contains PXN, ARHGEF7 and GIT1. Interacts with NISCH. Interacts with DVL1; mediates the formation of a DVL1, MUSK and PAK1 ternary complex involved in AChR clustering. Binds to the caspase-cleaved p110 isoform of CDC2L1 and CDC2L2, p110C, but not the full-length proteins. Interacts with ARHGEF7. Interacts tightly with GTP-bound but not GDP-bound CDC42/P21 and RAC1. Interacts with SCRIB. Interacts with PDPK1. Interacts (via kinase domain) with RAF1. Interacts with NCK1 and NCK2. Interacts with TBCB. Interacts with BRSK2. Interacts with SNAI1. Interacts with CIB1 isoform 2. Interacts with CIB1 (via N-terminal region); the interaction is direct, promotes PAK1 activity and occurs in a calcium-dependent manner. Interacts with INPP5K. Interacts with gamma-tubulin. Interacts with RHOU; the interaction promotes PAK1 activation. Mg(2+) serves as cofactor. Post-translationally, autophosphorylated in trans, meaning that in a dimer, one kinase molecule phosphorylates the other one. Activated by autophosphorylation at Thr-423 in response to a conformation change, triggered by interaction with GTP-bound CDC42 or RAC1. Activated by phosphorylation at Thr-423 by BRSK2 and by PDPK1. Phosphorylated by JAK2 in response to PRL; this increases PAK1 kinase activity. Phosphorylated at Ser-21 by PKB/AKT; this reduces interaction with NCK1 and association with focal adhesion sites. Upon DNA damage, phosphorylated at Thr-212 and translocates to the nucleoplasm. Phosphorylated at tyrosine residues, which can be enhanced by NTN1. Overexpressed in gastric cancer cells and tissues (at protein level).

The protein localises to the cytoplasm. It localises to the cell junction. The protein resides in the focal adhesion. Its subcellular location is the cell projection. It is found in the lamellipodium. The protein localises to the cell membrane. It localises to the ruffle membrane. The protein resides in the invadopodium. Its subcellular location is the nucleus. It is found in the nucleoplasm. The protein localises to the chromosome. It localises to the cytoskeleton. The protein resides in the microtubule organizing center. Its subcellular location is the centrosome. The catalysed reaction is L-seryl-[protein] + ATP = O-phospho-L-seryl-[protein] + ADP + H(+). The enzyme catalyses L-threonyl-[protein] + ATP = O-phospho-L-threonyl-[protein] + ADP + H(+). Activated by binding small G proteins. Binding of GTP-bound CDC42 or RAC1 to the autoregulatory region releases monomers from the autoinhibited dimer, and enables activation by phosphorylation of Thr-423. Phosphorylation of Thr-84 by OXSR1 inhibits activation. In terms of biological role, protein kinase involved in intracellular signaling pathways downstream of integrins and receptor-type kinases that plays an important role in cytoskeleton dynamics, in cell adhesion, migration, proliferation, apoptosis, mitosis, and in vesicle-mediated transport processes. Can directly phosphorylate BAD and protects cells against apoptosis. Activated by interaction with CDC42 and RAC1. Functions as a GTPase effector that links the Rho-related GTPases CDC42 and RAC1 to the JNK MAP kinase pathway. Phosphorylates and activates MAP2K1, and thereby mediates activation of downstream MAP kinases. Involved in the reorganization of the actin cytoskeleton, actin stress fibers and of focal adhesion complexes. Phosphorylates the tubulin chaperone TBCB and thereby plays a role in the regulation of microtubule biogenesis and organization of the tubulin cytoskeleton. Plays a role in the regulation of insulin secretion in response to elevated glucose levels. Part of a ternary complex that contains PAK1, DVL1 and MUSK that is important for MUSK-dependent regulation of AChR clustering during the formation of the neuromuscular junction (NMJ). Activity is inhibited in cells undergoing apoptosis, potentially due to binding of CDC2L1 and CDC2L2. Phosphorylates MYL9/MLC2. Phosphorylates RAF1 at 'Ser-338' and 'Ser-339' resulting in: activation of RAF1, stimulation of RAF1 translocation to mitochondria, phosphorylation of BAD by RAF1, and RAF1 binding to BCL2. Phosphorylates SNAI1 at 'Ser-246' promoting its transcriptional repressor activity by increasing its accumulation in the nucleus. In podocytes, promotes NR3C2 nuclear localization. Required for atypical chemokine receptor ACKR2-induced phosphorylation of LIMK1 and cofilin (CFL1) and for the up-regulation of ACKR2 from endosomal compartment to cell membrane, increasing its efficiency in chemokine uptake and degradation. In synapses, seems to mediate the regulation of F-actin cluster formation performed by SHANK3, maybe through CFL1 phosphorylation and inactivation. Plays a role in RUFY3-mediated facilitating gastric cancer cells migration and invasion. In response to DNA damage, phosphorylates MORC2 which activates its ATPase activity and facilitates chromatin remodeling. In neurons, plays a crucial role in regulating GABA(A) receptor synaptic stability and hence GABAergic inhibitory synaptic transmission through its role in F-actin stabilization. In hippocampal neurons, necessary for the formation of dendritic spines and excitatory synapses; this function is dependent on kinase activity and may be exerted by the regulation of actomyosin contractility through the phosphorylation of myosin II regulatory light chain (MLC). Along with GIT1, positively regulates microtubule nucleation during interphase. Phosphorylates FXR1, promoting its localization to stress granules and activity. Phosphorylates ILK on 'Thr-173' and 'Ser-246', promoting nuclear export of ILK. The protein is Serine/threonine-protein kinase PAK 1 of Homo sapiens (Human).